We begin with the raw amino-acid sequence, 361 residues long: Phospho-N-acetylmuramoyl-pentapeptide-transferase (361 aa).

10 helical membrane-spanning segments follow: residues 25 to 45 (TGGA…WIID), 72 to 92 (TPTM…VLWA), 95 to 115 (LNPY…VGFY), 135 to 155 (LLIE…LGRA), 169 to 189 (VMLN…VGAG), 200 to 220 (GLAI…SYLA), 240 to 260 (LAVL…FNAP), 264 to 284 (IFMG…IAVA), 289 to 309 (IVLA…IVQV), and 338 to 358 (QIVI…LSTL).

Belongs to the glycosyltransferase 4 family. MraY subfamily. Mg(2+) serves as cofactor.

It localises to the cell inner membrane. The enzyme catalyses UDP-N-acetyl-alpha-D-muramoyl-L-alanyl-gamma-D-glutamyl-meso-2,6-diaminopimeloyl-D-alanyl-D-alanine + di-trans,octa-cis-undecaprenyl phosphate = di-trans,octa-cis-undecaprenyl diphospho-N-acetyl-alpha-D-muramoyl-L-alanyl-D-glutamyl-meso-2,6-diaminopimeloyl-D-alanyl-D-alanine + UMP. The protein operates within cell wall biogenesis; peptidoglycan biosynthesis. In terms of biological role, catalyzes the initial step of the lipid cycle reactions in the biosynthesis of the cell wall peptidoglycan: transfers peptidoglycan precursor phospho-MurNAc-pentapeptide from UDP-MurNAc-pentapeptide onto the lipid carrier undecaprenyl phosphate, yielding undecaprenyl-pyrophosphoryl-MurNAc-pentapeptide, known as lipid I. This is Phospho-N-acetylmuramoyl-pentapeptide-transferase from Rhodopseudomonas palustris (strain TIE-1).